An 880-amino-acid polypeptide reads, in one-letter code: DNA mismatch repair protein MutS (880 aa).

Residue 605–612 participates in ATP binding; the sequence is GPNMSGKS. A disordered region spans residues 790–829; sequence QETAAVPSRGVEPPAPVIEPTPAKEQTPVKEQTTPLVEES. The segment covering 818 to 829 has biased composition (polar residues); sequence VKEQTTPLVEES.

This sequence belongs to the DNA mismatch repair MutS family.

Its function is as follows. This protein is involved in the repair of mismatches in DNA. It is possible that it carries out the mismatch recognition step. This protein has a weak ATPase activity. In Limosilactobacillus fermentum (strain NBRC 3956 / LMG 18251) (Lactobacillus fermentum), this protein is DNA mismatch repair protein MutS.